Here is a 572-residue protein sequence, read N- to C-terminus: Methionine--tRNA ligase (572 aa).

The 'HIGH' region signature appears at 11 to 21 (PYVNHVPHLGT). Residues Cys143, Cys146, Cys156, and Cys159 each contribute to the Zn(2+) site. The short motif at 334–338 (QFSKS) is the 'KMSKS' region element. Lys337 is an ATP binding site.

The protein belongs to the class-I aminoacyl-tRNA synthetase family. MetG type 1 subfamily. The cofactor is Zn(2+).

Its subcellular location is the cytoplasm. It catalyses the reaction tRNA(Met) + L-methionine + ATP = L-methionyl-tRNA(Met) + AMP + diphosphate. Is required not only for elongation of protein synthesis but also for the initiation of all mRNA translation through initiator tRNA(fMet) aminoacylation. This chain is Methionine--tRNA ligase (metG), found in Aeropyrum pernix (strain ATCC 700893 / DSM 11879 / JCM 9820 / NBRC 100138 / K1).